Consider the following 428-residue polypeptide: Probable dual-specificity RNA methyltransferase RlmN 2 (428 aa).

Catalysis depends on glutamate 142, which acts as the Proton acceptor. In terms of domain architecture, Radical SAM core spans 148 to 414; it reads FAGRATACVS…STVRQRRGID (267 aa). The cysteines at positions 155 and 419 are disulfide-linked. [4Fe-4S] cluster-binding residues include cysteine 162, cysteine 166, and cysteine 169. The span at 207 to 228 shows a compositional bias: basic and acidic residues; sequence MRDPSPGREAGEKSRDEADRHR. The disordered stretch occupies residues 207-232; sequence MRDPSPGREAGEKSRDEADRHRAPPT. S-adenosyl-L-methionine contacts are provided by residues 244-245, serine 276, 299-301, and asparagine 375; these read GE and SLH. Residue cysteine 419 is the S-methylcysteine intermediate of the active site.

It belongs to the radical SAM superfamily. RlmN family. The cofactor is [4Fe-4S] cluster.

It localises to the cytoplasm. The catalysed reaction is adenosine(2503) in 23S rRNA + 2 reduced [2Fe-2S]-[ferredoxin] + 2 S-adenosyl-L-methionine = 2-methyladenosine(2503) in 23S rRNA + 5'-deoxyadenosine + L-methionine + 2 oxidized [2Fe-2S]-[ferredoxin] + S-adenosyl-L-homocysteine. The enzyme catalyses adenosine(37) in tRNA + 2 reduced [2Fe-2S]-[ferredoxin] + 2 S-adenosyl-L-methionine = 2-methyladenosine(37) in tRNA + 5'-deoxyadenosine + L-methionine + 2 oxidized [2Fe-2S]-[ferredoxin] + S-adenosyl-L-homocysteine. Functionally, specifically methylates position 2 of adenine 2503 in 23S rRNA and position 2 of adenine 37 in tRNAs. The chain is Probable dual-specificity RNA methyltransferase RlmN 2 from Opitutus terrae (strain DSM 11246 / JCM 15787 / PB90-1).